The following is a 230-amino-acid chain: MSVRILVVDDDRAVRESLRRSLSFNGYSVELAHDGVEALDMIASDRPDALVLDVMMPRLDGLEVCRQLRSTGDDLPILVLTARDSVSERVAGLDAGADDYLPKPFALEELLARMRALLRRTKPEDAAESMAMRFSDLTLDPVTREVNRGQRRISLTRTEFALLEMLIANPRRVLTRSRILEEVWGFDFPTSGNALEVYVGYLRRKTEADGEPRLIHTVRGVGYVLRETPP.

A Response regulatory domain is found at 4-118 (RILVVDDDRA…ELLARMRALL (115 aa)). At Asp-48 the chain carries 4-aspartylphosphate. The segment at residues 129–227 (SMAMRFSDLT…VRGVGYVLRE (99 aa)) is a DNA-binding region (ompR/PhoB-type).

As to quaternary structure, monomer. Interaction with each conserved 8-bp repeat requires tandem binding by two protein monomers. Phosphorylated and dephosphorylated by MprB.

It localises to the cytoplasm. Its function is as follows. Member of the two-component regulatory system MprB/MprA which contributes to maintaining a balance among several systems involved in stress resistance and is required for establishment and maintenance of persistent infection in the host. Functions as a transcriptional regulator that recognizes a 19-bp nucleotide motif comprizing two loosely conserved 8-bp direct DNA-binding motif repeats separated by a 3-bp spacer region. MprB/MprA up-regulates expression of mprA and pepD. This is Response regulator MprA (mprA) from Mycobacterium bovis (strain ATCC BAA-935 / AF2122/97).